A 148-amino-acid polypeptide reads, in one-letter code: Lysozyme C (148 aa).

Positions 1–18 are cleaved as a signal peptide; sequence MKAVIILGLVLLSVTVQG. Residues 19–148 form the C-type lysozyme domain; that stretch reads KIFERCELAR…VSQYVQGCGV (130 aa). Cystine bridges form between C24–C146, C48–C134, C83–C99, and C95–C113. Catalysis depends on residues E53 and D71.

Belongs to the glycosyl hydrolase 22 family. Monomer.

It is found in the secreted. The catalysed reaction is Hydrolysis of (1-&gt;4)-beta-linkages between N-acetylmuramic acid and N-acetyl-D-glucosamine residues in a peptidoglycan and between N-acetyl-D-glucosamine residues in chitodextrins.. In terms of biological role, lysozymes have primarily a bacteriolytic function; those in tissues and body fluids are associated with the monocyte-macrophage system and enhance the activity of immunoagents. This Miopithecus talapoin (Angolan talapoin) protein is Lysozyme C (LYZ).